The primary structure comprises 239 residues: Increased recombination centers protein 22-1 (239 aa).

An N-terminal signal peptide occupies residues 1–19; sequence MKLSTIFTAFAATIATVAG. Topologically, residues 20 to 161 are lumenal; the sequence is YETTGSKQTV…AAVSFFDPRL (142 aa). Residues 162–182 form a helical membrane-spanning segment; that stretch reads IFLELVLLITFAGLIYVGYEI. Residues 183-239 lie on the Cytoplasmic side of the membrane; it reads WGKQYFKGVASVKAKKVSAAKASSPVASGPSTTSATGYDTNWIPESHLKQKKTKKVN. The span at 201 to 213 shows a compositional bias: low complexity; the sequence is AAKASSPVASGPS. The segment at 201-222 is disordered; sequence AAKASSPVASGPSTTSATGYDT.

It belongs to the IRC22 family.

It is found in the endoplasmic reticulum membrane. Its function is as follows. Is probably involved in a pathway contributing to genomic integrity. In Candida albicans (strain WO-1) (Yeast), this protein is Increased recombination centers protein 22-1 (IRC22-1).